We begin with the raw amino-acid sequence, 507 residues long: MQEPLLGAEGPDYDTFPEKPPPSPGDRARVGTLQNKRVFLATFAAVLGNFSFGYALVYTSPVIPALERSLDPDLHLTKSQASWFGSVFTLGAAAGGLSAMILNDLLGRKLSIMFSAVPSAAGYALMAGAHGLWMLLLGRTLTGFAGGLTAACIPVYVSEIAPPGVRGALGATPQLMAVFGSLSLYALGLLLPWRWLAVAGEAPVLIMILLLSFMPNSPRFLLSRGRDEEALRALAWLRGTDVDVHWEFEQIQDNVRRQSSRVSWAEARAPHVCRPITVALLMRLLQQLTGITPILVYLQSIFDSTAVLLPPKDDAAIVGAVRLLSVLIAALTMDLAGRKVLLFVSAAIMFAANLTLGLYIHFGPRPLSPNSTAGLESESWGDLAQPLAAPAGYLTLVPLLATMLFIMGYAVGWGPITWLLMSEVLPLRARGVASGLCVLASWLTAFVLTKSFLPVVSTFGLQVPFFFFAAICLVSLVFTGCCVPETKGRSLEQIESFFRTGRRSFLR.

Residues 1-28 form a disordered region; it reads MQEPLLGAEGPDYDTFPEKPPPSPGDRA. Over 1–37 the chain is Cytoplasmic; sequence MQEPLLGAEGPDYDTFPEKPPPSPGDRARVGTLQNKR. A Dileucine internalization motif motif is present at residues 5–6; the sequence is LL. At Ser-23 the chain carries Phosphoserine. Residues 38-58 form a helical membrane-spanning segment; that stretch reads VFLATFAAVLGNFSFGYALVY. Topologically, residues 59-81 are extracellular; sequence TSPVIPALERSLDPDLHLTKSQA. A helical membrane pass occupies residues 82–102; it reads SWFGSVFTLGAAAGGLSAMIL. Topologically, residues 103–111 are cytoplasmic; the sequence is NDLLGRKLS. Residues 112–132 form a helical membrane-spanning segment; sequence IMFSAVPSAAGYALMAGAHGL. Over 133–140 the chain is Extracellular; the sequence is WMLLLGRT. Residues 141-161 traverse the membrane as a helical segment; that stretch reads LTGFAGGLTAACIPVYVSEIA. The Cytoplasmic segment spans residues 162 to 168; sequence PPGVRGA. Residues 169–189 form a helical membrane-spanning segment; the sequence is LGATPQLMAVFGSLSLYALGL. Gln-174 contributes to the a D-hexose binding site. Residues 190 to 194 lie on the Extracellular side of the membrane; it reads LLPWR. Residues 195 to 215 traverse the membrane as a helical segment; sequence WLAVAGEAPVLIMILLLSFMP. The Cytoplasmic segment spans residues 216–289; it reads NSPRFLLSRG…LLMRLLQQLT (74 aa). A D-hexose is bound at residue 286–287; it reads QQ. A helical membrane pass occupies residues 290–310; sequence GITPILVYLQSIFDSTAVLLP. Residues 311-314 are Extracellular-facing; the sequence is PKDD. A helical transmembrane segment spans residues 315 to 335; sequence AAIVGAVRLLSVLIAALTMDL. Topologically, residues 336 to 339 are cytoplasmic; it reads AGRK. The chain crosses the membrane as a helical span at residues 340-360; that stretch reads VLLFVSAAIMFAANLTLGLYI. Over 361–395 the chain is Extracellular; it reads HFGPRPLSPNSTAGLESESWGDLAQPLAAPAGYLT. Asn-370 is a glycosylation site (N-linked (GlcNAc...) asparagine). Residues 396–416 form a helical membrane-spanning segment; the sequence is LVPLLATMLFIMGYAVGWGPI. At 417–435 the chain is on the cytoplasmic side; that stretch reads TWLLMSEVLPLRARGVASG. An a D-hexose-binding site is contributed by Trp-418. The helical transmembrane segment at 436-456 threads the bilayer; that stretch reads LCVLASWLTAFVLTKSFLPVV. Topologically, residues 457 to 462 are extracellular; the sequence is STFGLQ. Residues 463–483 traverse the membrane as a helical segment; that stretch reads VPFFFFAAICLVSLVFTGCCV. Residues 484–507 lie on the Cytoplasmic side of the membrane; that stretch reads PETKGRSLEQIESFFRTGRRSFLR.

It belongs to the major facilitator superfamily. Sugar transporter (TC 2.A.1.1) family. Glucose transporter subfamily. As to expression, highly expressed in brain, spleen and peripheral blood leukocytes.

The protein resides in the lysosome membrane. In terms of biological role, probable sugar transporter that acts as a regulator of glycolysis in macrophages. Does not transport glucose. The protein is Solute carrier family 2, facilitated glucose transporter member 6 of Homo sapiens (Human).